A 444-amino-acid chain; its full sequence is Homogentisate 1,2-dioxygenase (444 aa).

Catalysis depends on H298, which acts as the Proton acceptor. 2 residues coordinate Fe cation: H341 and E347. Homogentisate-binding residues include Y356 and H377. H377 is a binding site for Fe cation.

It belongs to the homogentisate dioxygenase family. As to quaternary structure, hexamer; dimer of trimers. The cofactor is Fe cation.

The catalysed reaction is homogentisate + O2 = 4-maleylacetoacetate + H(+). The protein operates within amino-acid degradation; L-phenylalanine degradation; acetoacetate and fumarate from L-phenylalanine: step 4/6. In terms of biological role, involved in the catabolism of homogentisate (2,5-dihydroxyphenylacetate or 2,5-OH-PhAc), a central intermediate in the degradation of phenylalanine and tyrosine. Catalyzes the oxidative ring cleavage of the aromatic ring of homogentisate to yield maleylacetoacetate. This chain is Homogentisate 1,2-dioxygenase, found in Burkholderia orbicola (strain MC0-3).